Consider the following 298-residue polypeptide: Glycine--tRNA ligase alpha subunit (298 aa).

It belongs to the class-II aminoacyl-tRNA synthetase family. In terms of assembly, tetramer of two alpha and two beta subunits.

Its subcellular location is the cytoplasm. It carries out the reaction tRNA(Gly) + glycine + ATP = glycyl-tRNA(Gly) + AMP + diphosphate. The chain is Glycine--tRNA ligase alpha subunit from Helicobacter hepaticus (strain ATCC 51449 / 3B1).